A 746-amino-acid polypeptide reads, in one-letter code: Dystrobrevin alpha (746 aa).

Residues 1-288 are interaction with MAGEE1; the sequence is MIEDSGKRGN…SHSNQHQMKE (288 aa). The segment at 238-294 adopts a ZZ-type zinc-finger fold; sequence FHPVECSYCHSESMMGFRYRCQQCHNYQLCQDCFWRGHAGGSHSNQHQMKEYTSWKS. 8 residues coordinate Zn(2+): Cys-243, Cys-246, Cys-258, Cys-261, Cys-267, Cys-270, His-280, and His-284. Residues 397–447 are syntrophin-binding region; it reads DRLADEHVLIGLYVNMLRNDPPCMLESSNRLDEEHRLIARYAARLAAESSS. The stretch at 458–557 forms a coiled coil; that stretch reads DISFTIDANK…KLLKEEELKQ (100 aa). 3 disordered regions span residues 555-577, 646-667, and 684-721; these read LKQG…SRPI, ETES…APSP, and YIHG…VRQL. The segment covering 563-576 has biased composition (low complexity); that stretch reads SSPRSSPSHTISRP. The residue at position 666 (Ser-666) is a Phosphoserine.

The protein belongs to the dystrophin family. Dystrobrevin subfamily. As to quaternary structure, interacts with dystrophin, utrophin and the syntrophins SNTA1, SNTB1, SNTB2, SNTG1 and SNTG2. Binds dystrobrevin binding protein 1. Interacts with MAGEE1. Interacts with Ctnnal1. The interaction is required for correct localization of both Ctnnal1 and Dtna. Does not interact with utrophin. In terms of assembly, does not interact with syntrophin. Post-translationally, phosphorylation of isoform 2 on tyrosine kinase substrate domain present in the C-terminus. Expressed in skeletal muscle, heart, lung and brain. Sarcolemma and neuromuscular junction in skeletal muscle. Isoform 2 is restricted to the neuromuscular junction. Isoforms 5 and 6 are only expressed in muscle.

Its subcellular location is the cytoplasm. The protein localises to the synapse. It is found in the cell membrane. Its function is as follows. Involved in synapse maturation and required for normal muscle function. The sequence is that of Dystrobrevin alpha (Dtna) from Mus musculus (Mouse).